We begin with the raw amino-acid sequence, 77 residues long: Acyl carrier protein (77 aa).

The Carrier domain maps to 1 to 76 (MSLEDDVKAI…DVIKYIQERQ (76 aa)). Serine 36 carries the O-(pantetheine 4'-phosphoryl)serine modification.

This sequence belongs to the acyl carrier protein (ACP) family. Post-translationally, 4'-phosphopantetheine is transferred from CoA to a specific serine of apo-ACP by AcpS. This modification is essential for activity because fatty acids are bound in thioester linkage to the sulfhydryl of the prosthetic group.

It localises to the cytoplasm. It participates in lipid metabolism; fatty acid biosynthesis. Its function is as follows. Carrier of the growing fatty acid chain in fatty acid biosynthesis. The protein is Acyl carrier protein of Chlamydia muridarum (strain MoPn / Nigg).